The primary structure comprises 73 residues: Dipeptidyl peptidase 3 (73 aa).

It belongs to the peptidase M49 family. Requires Zn(2+) as cofactor.

Its subcellular location is the membrane. It carries out the reaction Release of an N-terminal dipeptide from a peptide comprising four or more residues, with broad specificity. Also acts on dipeptidyl 2-naphthylamides.. Degrades neuropeptide proctolin (RYLPT) by cleavage between Tyr and Leu residues. The protein is Dipeptidyl peptidase 3 of Blaberus craniifer (Death's head cockroach).